We begin with the raw amino-acid sequence, 403 residues long: MGALTIVAKYMIVAQIEVNGSVDKSDIIGALFSQTEGLLGKDMDLRELQMMGRIGRIEVDIFEKNSKTKAKIYIPSNLDRYETALVAALIESIERVGPYLANIKVLEIKDLREEKRRRIIEKAKELVKMIEEEILPDTKEIIEKLKEDVAKAEIVEYGPEKLPAGPDVEKSDSVIIVEGRADVVNLVKHGYRNVIAIEGISRGIPQTVIDLSKKKSVTVFIDGDKGGELVLRELLKVAHIDYIARAPPGKEVEQLTAKEIAKALRNKVTLEEWLAQQKAAGEKTEAPAQPTQQQPPPAEAPIQFPFDMSKKVEEMLGTLEAEIYDANWGLVKKLPVRELPDFLTGEGDSFYAIVMDGIVTQRIVDLAAKKGVKVIVTARVGPLTKVPEDMKIITFEKLTQKVA.

In terms of domain architecture, Toprim spans 172 to 248 (DSVIIVEGRA…HIDYIARAPP (77 aa)). Residues glutamate 178, aspartate 222, and aspartate 224 each contribute to the Mg(2+) site. The disordered stretch occupies residues 279-300 (AAGEKTEAPAQPTQQQPPPAEA).

The protein belongs to the archaeal DnaG primase family. As to quaternary structure, forms a ternary complex with MCM helicase and DNA. Component of the archaeal exosome complex. The cofactor is Mg(2+).

The catalysed reaction is ssDNA + n NTP = ssDNA/pppN(pN)n-1 hybrid + (n-1) diphosphate.. RNA polymerase that catalyzes the synthesis of short RNA molecules used as primers for DNA polymerase during DNA replication. Also part of the exosome, which is a complex involved in RNA degradation. Acts as a poly(A)-binding protein that enhances the interaction between heteromeric, adenine-rich transcripts and the exosome. The protein is DNA primase DnaG of Pyrobaculum neutrophilum (strain DSM 2338 / JCM 9278 / NBRC 100436 / V24Sta) (Thermoproteus neutrophilus).